Reading from the N-terminus, the 25-residue chain is Toxin Tpa3 (25 aa).

The protein belongs to the non-disulfide-bridged peptide (NDBP) superfamily. As to expression, expressed by the venom gland.

The protein localises to the secreted. Its function is as follows. Unknown. Is not toxic to mammals. This chain is Toxin Tpa3, found in Tityus pachyurus (Colombian scorpion).